Consider the following 268-residue polypeptide: Glucosamine-6-phosphate deaminase (268 aa).

Asp-72 acts as the Proton acceptor; for enolization step in catalysis. Asp-141 (for ring-opening step) is an active-site residue. His-143 functions as the Proton acceptor; for ring-opening step in the catalytic mechanism. Glu-148 functions as the For ring-opening step in the catalytic mechanism.

This sequence belongs to the glucosamine/galactosamine-6-phosphate isomerase family. NagB subfamily. As to quaternary structure, homohexamer.

It catalyses the reaction alpha-D-glucosamine 6-phosphate + H2O = beta-D-fructose 6-phosphate + NH4(+). Its pathway is amino-sugar metabolism; N-acetylneuraminate degradation; D-fructose 6-phosphate from N-acetylneuraminate: step 5/5. Allosterically activated by N-acetylglucosamine 6-phosphate (GlcNAc6P). Catalyzes the reversible isomerization-deamination of glucosamine 6-phosphate (GlcN6P) to form fructose 6-phosphate (Fru6P) and ammonium ion. The sequence is that of Glucosamine-6-phosphate deaminase from Proteus mirabilis (strain HI4320).